Consider the following 348-residue polypeptide: Nicotinate-nucleotide--dimethylbenzimidazole phosphoribosyltransferase (348 aa).

Glutamate 316 (proton acceptor) is an active-site residue.

The protein belongs to the CobT family.

It carries out the reaction 5,6-dimethylbenzimidazole + nicotinate beta-D-ribonucleotide = alpha-ribazole 5'-phosphate + nicotinate + H(+). It functions in the pathway nucleoside biosynthesis; alpha-ribazole biosynthesis; alpha-ribazole from 5,6-dimethylbenzimidazole: step 1/2. In terms of biological role, catalyzes the synthesis of alpha-ribazole-5'-phosphate from nicotinate mononucleotide (NAMN) and 5,6-dimethylbenzimidazole (DMB). The sequence is that of Nicotinate-nucleotide--dimethylbenzimidazole phosphoribosyltransferase from Xanthomonas campestris pv. campestris (strain B100).